The primary structure comprises 590 residues: Putative sodium/calcium exchanger 6 (590 aa).

Positions methionine 1–glycine 19 are cleaved as a signal peptide. The next 11 helical transmembrane spans lie at isoleucine 97–alanine 117, valine 139–alanine 159, leucine 173–phenylalanine 193, isoleucine 208–valine 228, isoleucine 230–serine 250, proline 368–cysteine 388, proline 397–phenylalanine 417, isoleucine 440–valine 460, alanine 499–isoleucine 519, tyrosine 535–alanine 555, and leucine 568–valine 588.

This sequence belongs to the Ca(2+):cation antiporter (CaCA) (TC 2.A.19) family.

The protein localises to the membrane. This chain is Putative sodium/calcium exchanger 6 (ncx-6), found in Caenorhabditis elegans.